Consider the following 307-residue polypeptide: tRNA pseudouridine synthase B (307 aa).

Asp-47 acts as the Nucleophile in catalysis.

This sequence belongs to the pseudouridine synthase TruB family. Type 1 subfamily.

It catalyses the reaction uridine(55) in tRNA = pseudouridine(55) in tRNA. In terms of biological role, responsible for synthesis of pseudouridine from uracil-55 in the psi GC loop of transfer RNAs. The sequence is that of tRNA pseudouridine synthase B from Chromohalobacter salexigens (strain ATCC BAA-138 / DSM 3043 / CIP 106854 / NCIMB 13768 / 1H11).